We begin with the raw amino-acid sequence, 796 residues long: Vacuolar protein sorting-associated protein 35 (796 aa).

Phosphoserine is present on Ser-7. Interaction with SNX3 stretches follow at residues 25 to 44 and 205 to 215; these read VQSFQMKRCLDKNKLMDALK and DREKRERERQE. The interval 438–796 is interaction with SLC11A2; it reads CYVLSNVLDY…EGPIYEGLIL (359 aa). The interaction with IGF2R cytoplasmic domain stretch occupies residues 500 to 693; that stretch reads SEDPDQQYLI…DKNGEELHGG (194 aa). Ser-783 is modified (phosphoserine). At Tyr-791 the chain carries Phosphotyrosine.

This sequence belongs to the VPS35 family. In terms of assembly, component of the heterotrimeric retromer cargo-selective complex (CSC), also decribed as vacuolar protein sorting subcomplex (VPS), formed by VPS26 (VPS26A or VPS26B), VPS29 and VPS35. The CSC has a highly elongated structure with VPS26 and VPS29 binding independently at opposite distal ends of VPS35 as central platform. The CSC is believed to associate with variable sorting nexins to form functionally distinct retromer complex variants. The originally described retromer complex (also called SNX-BAR retromer) is a pentamer containing the CSC and a heterodimeric membrane-deforming subcomplex formed between SNX1 or SNX2 and SNX5 or SNX6 (also called SNX-BAR subcomplex); the respective CSC and SNX-BAR subcomplexes associate with low affinity. The CSC associates with SNX3 to form a SNX3-retromer complex. The CSC associates with SNX27, the WASH complex and the SNX-BAR subcomplex to form the SNX27-retromer complex. Interacts with VPS26A, VPS26B, VPS29, SNX1, SNX2, IGF2R, SNX3, GOLPH3, LRRK2, SLC11A2, WASHC2A, WASHC2C, FKBP15, WASHC1, RAB7A, SNX27, WASHC5, EHD1. Interacts with MAGEL2; leading to recruitment of the TRIM27:MAGEL2 E3 ubiquitin ligase complex retromer-containing endosomes. Interacts with SORCS2. As to quaternary structure, (Microbial infection) Interacts with human papillomavirus 16 minor capsid protein L2 (via C-terminus); this interaction mediates the transport of the capsid from the early endosome to the Golgi apparatus. Ubiquitous. Highly expressed in heart, brain, placenta, skeletal muscle, spleen, thymus, testis, ovary, small intestine, kidney and colon.

It localises to the cytoplasm. It is found in the membrane. The protein localises to the endosome. The protein resides in the early endosome. Its subcellular location is the late endosome. Its function is as follows. Acts as a component of the retromer cargo-selective complex (CSC). The CSC is believed to be the core functional component of retromer or respective retromer complex variants acting to prevent missorting of selected transmembrane cargo proteins into the lysosomal degradation pathway. The recruitment of the CSC to the endosomal membrane involves RAB7A and SNX3. The CSC seems to associate with the cytoplasmic domain of cargo proteins predominantly via VPS35; however, these interactions seem to be of low affinity and retromer SNX proteins may also contribute to cargo selectivity thus questioning the classical function of the CSC. The SNX-BAR retromer mediates retrograde transport of cargo proteins from endosomes to the trans-Golgi network (TGN) and is involved in endosome-to-plasma membrane transport for cargo protein recycling. The SNX3-retromer mediates the retrograde endosome-to-TGN transport of WLS distinct from the SNX-BAR retromer pathway. The SNX27-retromer is believed to be involved in endosome-to-plasma membrane trafficking and recycling of a broad spectrum of cargo proteins. The CSC seems to act as recruitment hub for other proteins, such as the WASH complex and TBC1D5. Required for retrograde transport of lysosomal enzyme receptor IGF2R and SLC11A2. Required to regulate transcytosis of the polymeric immunoglobulin receptor (pIgR-pIgA). Required for endosomal localization of WASHC2C. Mediates the association of the CSC with the WASH complex via WASHC2. Required for the endosomal localization of TBC1D5. Functionally, (Microbial infection) The heterotrimeric retromer cargo-selective complex (CSC) mediates the exit of human papillomavirus from the early endosome and the delivery to the Golgi apparatus. This Homo sapiens (Human) protein is Vacuolar protein sorting-associated protein 35.